Consider the following 3122-residue polypeptide: tRNA nuclease CdiA-2 (3122 aa).

The interval 36–205 (RAGVVPAWLS…ATLTTGNPNF (170 aa)) is two-partner system transport domain (TPS). Residues 54–74 (VALAVLVAAGVVPIWVNAQVV) form a helical membrane-spanning segment. Positions 256 to 1254 (VVAGSNQVDY…GGSVAIQASG (999 aa)) are FHA-1. A disordered region spans residues 492–512 (GMTLGGGSLSNQGGRANSQGP). Polar residues predominate over residues 500–512 (LSNQGGRANSQGP). The tract at residues 1345–1635 (TRRVMQTSGN…SATAVNVLSN (291 aa)) is receptor binding domain (RBD). The tract at residues 1790–1845 (TAGNIDLKNTQVFTNSGTVKADTTLALQGKQIDNAFGALQSGGLTSLDTTGNVDLT) is periplasmic FHA-1 repeat (pFR). The FHA-2 stretch occupies residues 1947-2085 (SDTDLNSATG…TERHVYNSRE (139 aa)). 3 disordered regions span residues 2002–2031 (TSTINANSSGDQGNRSYAETRHGSDQALTG), 2151–2174 (TTSQDTSQSSTTYQEQHSGLMSGG), and 2325–2352 (IGVQVSVGSSHSSMQSSEDQTIQRGSSI). The tract at residues 2086–2825 (THSRSGVVSG…SAGAAMASNV (740 aa)) is pretoxin (PT) domain. Low complexity-rich tracts occupy residues 2151–2170 (TTSQDTSQSSTTYQEQHSGL) and 2325–2341 (IGVQVSVGSSHSSMQSS). Positions 2342 to 2352 (EDQTIQRGSSI) are enriched in polar residues. Residues 2821 to 3122 (MASNVELYNA…NITIIKPKGN (302 aa)) form a C-terminal effector domain (CT), has tRNA nuclease activity region. The ELYN C-terminal motif signature appears at 2826–2829 (ELYN). The tract at residues 2948–3000 (GATDRTPPSNAILSNSNSDNNSTQGSQSGTVTKTPNPEATGSLSGKPTQIPPL) is disordered. Residues 2948–3122 (GATDRTPPSN…NITIIKPKGN (175 aa)) are truncated CT domain, has tRNA nuclease activity, sufficient for interaction with CdiI-2. The segment covering 2953–2994 (TPPSNAILSNSNSDNNSTQGSQSGTVTKTPNPEATGSLSGKP) has biased composition (polar residues). Residues 2987-3122 (TGSLSGKPTQ…NITIIKPKGN (136 aa)) are has tRNase activity. Catalysis depends on residues E3012, D3039, D3048, and K3067.

This sequence in the N-terminal section; belongs to the CdiA toxin family. As to quaternary structure, interacts with cognate immunity protein CdiI, which blocks its tRNA nuclease activity. The truncated CT fragment (residues 2948-3122) specifically interacts with cognate CdiI which inhibits the tRNA nuclease activity. The truncated CT is more stable in vitro than the original CT fragment characterized in E.coli.

It is found in the membrane. The protein localises to the secreted. Its subcellular location is the target cell. It localises to the target cell cytoplasm. In terms of biological role, toxic component of a toxin-immunity protein module, which functions as a cellular contact-dependent growth inhibition (CDI) system. CDI modules allow bacteria to communicate with and inhibit the growth of closely related neighboring bacteria in a contact-dependent fashion. The C-terminal 301 residues (the CT fragment) cleaves near the C-terminus of E.coli tRNA1B(Ala), probably preventing tRNA charging, and inhibits growth in E.coli. A truncated CT fragment (residues 2948-3122) has tRNA endonuclease activity on several B.thailandensis tRNAs as well as tRNA2(Arg) where it cleaves after A-70 and U-71. Inactive CT domain binds tRNA, probably in a 1:1 complex. Toxic activity is neutralized by coexpression of the cognate immunity protein CdiI in E.coli, but not by non-cognate immunity proteins from other strains of B.pseudomallei. May use lipopolysaccharide as its target cell receptor. Probably gains access to the cytoplasm of target cells (B.thailandensis strain E264) by using integral inner membrane protein BTH_II0599. Protein BTH_I0359 is also implicated in an unknown fashion in CDI in B.thailandensis strain E264. Its function is as follows. Expression of this cdiAIB locus in B.thailandensis confers protection against other bacteria carrying the locus; growth inhibition requires cellular contact. Functionally, the CdiA protein is thought to be exported from the cell through the central lumen of CdiB, the other half of its two-partner system (TPS). The TPS domain probably remains associated with CdiB while the FHA-1 domain forms an extended filament with the receptor-binding domain (RBD) at its extremity; in the secretion arrested state the C-terminus of the RBD domain form a hairpin-like structure as the FHA-2, PT and CT domains are periplasmic. Upon binding to a target cell outer membrane receptor (possibly a lipoprotein in this CDI) a signal is transmitted to activate secretion. The filament elongates slightly, the rest of CdiA is secreted and the FHA-2 domain becomes stably associated with the target cell's outer membrane where it facilitates entry of the toxic CT domain into the target cell periplasm. From there the toxic CT domain is cleaved and gains access to the target cell cytoplasm via an inner membrane protein (probably inner membrane protein BTH_II0599). This chain is tRNA nuclease CdiA-2 (cdiA2), found in Burkholderia pseudomallei (strain 1026b).